A 159-amino-acid polypeptide reads, in one-letter code: Small ribosomal subunit protein uS7c (159 aa).

This sequence belongs to the universal ribosomal protein uS7 family. As to quaternary structure, part of the 30S ribosomal subunit.

It is found in the plastid. It localises to the chloroplast. In terms of biological role, one of the primary rRNA binding proteins, it binds directly to 16S rRNA where it nucleates assembly of the head domain of the 30S subunit. This is Small ribosomal subunit protein uS7c (rps7) from Bigelowiella natans (Pedinomonas minutissima).